We begin with the raw amino-acid sequence, 339 residues long: Fructose-1,6-bisphosphatase class 1 (339 aa).

4 residues coordinate Mg(2+): Glu-91, Asp-113, Leu-115, and Asp-116. Residues 116–119 (DGSS), Asn-210, and Lys-276 contribute to the substrate site. Position 282 (Glu-282) interacts with Mg(2+).

The protein belongs to the FBPase class 1 family. As to quaternary structure, homotetramer. Requires Mg(2+) as cofactor.

It localises to the cytoplasm. The catalysed reaction is beta-D-fructose 1,6-bisphosphate + H2O = beta-D-fructose 6-phosphate + phosphate. Its pathway is carbohydrate biosynthesis; gluconeogenesis. The polypeptide is Fructose-1,6-bisphosphatase class 1 (Bordetella bronchiseptica (strain ATCC BAA-588 / NCTC 13252 / RB50) (Alcaligenes bronchisepticus)).